We begin with the raw amino-acid sequence, 311 residues long: Cytosolic Fe-S cluster assembly factor Nubp1 homolog (311 aa).

[4Fe-4S] cluster contacts are provided by cysteine 9, cysteine 23, cysteine 26, and cysteine 32. An ATP-binding site is contributed by 63–70 (GKGGVGKS). Cysteine 241 and cysteine 244 together coordinate [4Fe-4S] cluster.

The protein belongs to the Mrp/NBP35 ATP-binding proteins family. NUBP1/NBP35 subfamily. Heterotetramer of 2 Nubp1 and 2 Nubp2 chains. Requires [4Fe-4S] cluster as cofactor.

It localises to the cytoplasm. Functionally, component of the cytosolic iron-sulfur (Fe/S) protein assembly (CIA) machinery. Required for maturation of extramitochondrial Fe-S proteins. The Nubp1-Nubp2 heterotetramer forms a Fe-S scaffold complex, mediating the de novo assembly of an Fe-S cluster and its transfer to target apoproteins. This Drosophila grimshawi (Hawaiian fruit fly) protein is Cytosolic Fe-S cluster assembly factor Nubp1 homolog.